A 161-amino-acid chain; its full sequence is Cyclic pyranopterin monophosphate synthase (161 aa).

Substrate-binding positions include 75-77 and 113-114; these read LCH and ME. The active site involves Asp-128.

It belongs to the MoaC family. As to quaternary structure, homohexamer; trimer of dimers.

It catalyses the reaction (8S)-3',8-cyclo-7,8-dihydroguanosine 5'-triphosphate = cyclic pyranopterin phosphate + diphosphate. The protein operates within cofactor biosynthesis; molybdopterin biosynthesis. Its function is as follows. Catalyzes the conversion of (8S)-3',8-cyclo-7,8-dihydroguanosine 5'-triphosphate to cyclic pyranopterin monophosphate (cPMP). The sequence is that of Cyclic pyranopterin monophosphate synthase from Salmonella arizonae (strain ATCC BAA-731 / CDC346-86 / RSK2980).